The primary structure comprises 247 residues: Eukaryotic translation initiation factor 6 (247 aa).

2 positions are modified to phosphoserine; by CK1: Ser174 and Ser175.

It belongs to the eIF-6 family. Monomer. Associates with the 60S ribosomal subunit. Post-translationally, phosphorylation at Ser-174 and Ser-175 promotes nuclear export.

Its subcellular location is the cytoplasm. The protein localises to the nucleus. The protein resides in the nucleolus. Functionally, binds to the 60S ribosomal subunit and prevents its association with the 40S ribosomal subunit to form the 80S initiation complex in the cytoplasm. Is also involved in ribosome biogenesis. Associates with pre-60S subunits in the nucleus and is involved in its nuclear export. The protein is Eukaryotic translation initiation factor 6 (tif6) of Emericella nidulans (strain FGSC A4 / ATCC 38163 / CBS 112.46 / NRRL 194 / M139) (Aspergillus nidulans).